Consider the following 140-residue polypeptide: FAD synthase (140 aa).

ATP contacts are provided by residues 9 to 10, 14 to 17, N92, and Y119; these read TF and HPGH.

This sequence belongs to the archaeal FAD synthase family. As to quaternary structure, homodimer. A divalent metal cation serves as cofactor.

The catalysed reaction is FMN + ATP + H(+) = FAD + diphosphate. It participates in cofactor biosynthesis; FAD biosynthesis; FAD from FMN: step 1/1. Functionally, catalyzes the transfer of the AMP portion of ATP to flavin mononucleotide (FMN) to produce flavin adenine dinucleotide (FAD) coenzyme. The polypeptide is FAD synthase (Methanocorpusculum labreanum (strain ATCC 43576 / DSM 4855 / Z)).